A 260-amino-acid polypeptide reads, in one-letter code: Dehydrogenase/reductase SDR family member 11 (260 aa).

An N-terminal signal peptide occupies residues methionine 1–alanine 30. NADP(+) is bound by residues glycine 18–isoleucine 23, arginine 43–threonine 44, glutamate 49, aspartate 70–leucine 71, and asparagine 97. The substrate site is built by serine 151 and tyrosine 166. NADP(+)-binding positions include tyrosine 166, lysine 170, valine 201–glutamine 204, and lysine 208. Tyrosine 166 serves as the catalytic Proton acceptor.

It belongs to the short-chain dehydrogenases/reductases (SDR) family. Homotetramer. As to expression, isoform 1: Ubiquitously expressed, with highest levels in testis, small intestine, colon, kidney, brain and heart. Isoform 3: Expressed in brain, heart and skeletal muscle.

The protein resides in the secreted. It catalyses the reaction a 3beta-hydroxysteroid + NADP(+) = a 3-oxosteroid + NADPH + H(+). The catalysed reaction is 17beta-estradiol + NAD(+) = estrone + NADH + H(+). The enzyme catalyses 17beta-estradiol + NADP(+) = estrone + NADPH + H(+). Its pathway is steroid biosynthesis; estrogen biosynthesis. Its activity is regulated as follows. Inhibited by flavonoids including apigenin, luteolin, genistein, kaempferol and quercetin and also by carbenoxolone, zearalenone, glycyrrhetinic, curcumin and flufenamic acid. Catalyzes the conversion of the 17-keto group of estrone, 4- and 5-androstenes and 5-alpha-androstanes into their 17-beta-hydroxyl metabolites and the conversion of the 3-keto group of 3-, 3,17- and 3,20- diketosteroids into their 3-hydroxyl metabolites. Exhibits reductive 3-beta-hydroxysteroid dehydrogenase activity toward 5-beta-androstanes, 5-beta-pregnanes, 4-pregnenes and bile acids. May also reduce endogenous and exogenous alpha-dicarbonyl compounds and xenobiotic alicyclic ketones. The chain is Dehydrogenase/reductase SDR family member 11 (DHRS11) from Homo sapiens (Human).